The chain runs to 573 residues: Plasmepsin X (573 aa).

The signal sequence occupies residues 1–26; sequence MKRISPLNTLFYLSLFFSYTFKGLKC. Residues 27–221 constitute a propeptide that is removed on maturation; sequence TRIYKIGTKA…SSIEKNFIAL (195 aa). 2 disulfide bridges follow: Cys-39/Cys-51 and Cys-42/Cys-48. The segment at 167-211 is disordered; the sequence is KGNKNFTNNENNSDNENNSDNENNSDNENNLDNENNLDNENNSDN. The span at 183-203 shows a compositional bias: acidic residues; that stretch reads NNSDNENNSDNENNLDNENNL. The region spanning 248–567 is the Peptidase A1 domain; the sequence is FVGELLVGTP…ESRPSMVGVA (320 aa). Residue Asp-266 is part of the active site. A disulfide bridge connects residues Cys-279 and Cys-284. N-linked (GlcNAc...) asparagine glycosylation is present at Asn-334. A disulfide bond links Cys-447 and Cys-448. Residue Asp-457 is part of the active site. The cysteines at positions 482 and 521 are disulfide-linked.

The protein belongs to the peptidase A1 family. In terms of processing, autocleaved into a p16 prodomain form and two mature forms p44 and p51.

It is found in the cytoplasmic vesicle. The protein localises to the secretory vesicle. Inhibited by aminohydantoin compounds such as CWHM-117. During the asexual blood stage, processes key proteins essential for merozoite egress and invasion of host erythrocytes. Cleaves and activates proteases SUB1 and SUB2. May process members of the EBL and Rh protein families. Also cleaves apical membrane protein AMA1. During the mosquito vector stage and probably in ookinetes, cleaves CelTOS. This is Plasmepsin X from Plasmodium falciparum (isolate NF54).